The following is an 804-amino-acid chain: DNA gyrase subunit B (804 aa).

The region spanning 431–546 (CEMYIVEGDS…NGCVYIAQPP (116 aa)) is the Toprim domain. Residues Glu437, Asp511, and Asp513 each coordinate Mg(2+).

Belongs to the type II topoisomerase GyrB family. Heterotetramer, composed of two GyrA and two GyrB chains. In the heterotetramer, GyrA contains the active site tyrosine that forms a transient covalent intermediate with DNA, while GyrB binds cofactors and catalyzes ATP hydrolysis. It depends on Mg(2+) as a cofactor. Mn(2+) is required as a cofactor. The cofactor is Ca(2+).

The protein resides in the cytoplasm. The catalysed reaction is ATP-dependent breakage, passage and rejoining of double-stranded DNA.. Its function is as follows. A type II topoisomerase that negatively supercoils closed circular double-stranded (ds) DNA in an ATP-dependent manner to modulate DNA topology and maintain chromosomes in an underwound state. Negative supercoiling favors strand separation, and DNA replication, transcription, recombination and repair, all of which involve strand separation. Also able to catalyze the interconversion of other topological isomers of dsDNA rings, including catenanes and knotted rings. Type II topoisomerases break and join 2 DNA strands simultaneously in an ATP-dependent manner. The chain is DNA gyrase subunit B from Chlamydia muridarum (strain MoPn / Nigg).